A 61-amino-acid chain; its full sequence is Metallothionein-1E (61 aa).

M1 bears the N-acetylmethionine mark. Positions 1–29 (MDPNCSCPTGGSCSCAGSCTCKACRCTSC) are beta. A divalent metal cation contacts are provided by C5, C7, C13, C15, C19, C21, C24, C26, C29, C33, C34, C36, C37, C41, C44, C48, C50, C57, C59, and C60. Residues 30–61 (KKSCCSCCPVGCAKCAQGCICKGASDKCSCCA) form an alpha region.

This sequence belongs to the metallothionein superfamily. Type 1 family. Monomer.

Its function is as follows. Metallothioneins have a high content of cysteine residues that bind various heavy metals; these proteins are transcriptionally regulated by both heavy metals and glucocorticoids. This chain is Metallothionein-1E (MT1E), found in Sus scrofa (Pig).